A 225-amino-acid chain; its full sequence is ATP-dependent Clp protease proteolytic subunit (225 aa).

Residue Ser-123 is the Nucleophile of the active site. Residue His-148 is part of the active site.

Belongs to the peptidase S14 family. Fourteen ClpP subunits assemble into 2 heptameric rings which stack back to back to give a disk-like structure with a central cavity, resembling the structure of eukaryotic proteasomes.

The protein resides in the cytoplasm. It carries out the reaction Hydrolysis of proteins to small peptides in the presence of ATP and magnesium. alpha-casein is the usual test substrate. In the absence of ATP, only oligopeptides shorter than five residues are hydrolyzed (such as succinyl-Leu-Tyr-|-NHMec, and Leu-Tyr-Leu-|-Tyr-Trp, in which cleavage of the -Tyr-|-Leu- and -Tyr-|-Trp bonds also occurs).. Its function is as follows. Cleaves peptides in various proteins in a process that requires ATP hydrolysis. Has a chymotrypsin-like activity. Plays a major role in the degradation of misfolded proteins. The chain is ATP-dependent Clp protease proteolytic subunit from Chlorobium luteolum (strain DSM 273 / BCRC 81028 / 2530) (Pelodictyon luteolum).